We begin with the raw amino-acid sequence, 511 residues long: Phosphoenolpyruvate carboxylase (511 aa).

This sequence belongs to the PEPCase type 2 family. As to quaternary structure, homotetramer. Mg(2+) serves as cofactor.

The enzyme catalyses oxaloacetate + phosphate = phosphoenolpyruvate + hydrogencarbonate. With respect to regulation, allosterically inhibited by L-aspartate and L-malate. PEPC activity is not affected by allosteric activators of E.coli PEPC such as glucose 6-phosphate, fructose 1,6-bisphosphate, and acetyl coenzyme A. In terms of biological role, catalyzes the irreversible beta-carboxylation of phosphoenolpyruvate (PEP) to form oxaloacetate (OAA), a four-carbon dicarboxylic acid source for the tricarboxylic acid cycle. The chain is Phosphoenolpyruvate carboxylase from Saccharolobus solfataricus (strain ATCC 35092 / DSM 1617 / JCM 11322 / P2) (Sulfolobus solfataricus).